Here is a 1172-residue protein sequence, read N- to C-terminus: MPDMDIDVKDLEEFEATTGEINLSELGEGFLQSFCKKAATSFFDKYGLISHQLNSYNYFIEHGLQNVFQSFGEMLVEPSFDVVKKKDNDWRYATVKFGEVTVEKPTFFSDDKELEFLPWHARLQNMTYSARIKVNVQVEVFKNTVVKSDKFKTGQDNYVEKKILDVKKQDILIGSIPVMVKSILCKTSEKGKENCKKGDCAFDQGGYFVIKGAEKVFIAQEQMCTKRLWISNSPWTVSFRSENKRNRFIVRLSENEKAEDYKRREKVLTVYFLSTEIPVWLLFFALGVSSDKEAMDLIAFDGDDASITNSLIASIHVADAVCEAFRCGNNALTYVEQQIKSTKFPPAESVDECLHLYLFPGLQSLKKKARFLGYMVKCLLNSYAGKRKCENRDSFRNKRIELAGELLEREIRVHLAHARRKMTRAMQKHLSGDGDLKPIEHYLDASVITNGLSRAFSTGAWSHPFRKMERVSGVVANLGRANPLQTLIDLRRTRQQVLYTGKVGDARYPHPSHWGRVCFLSTPDGENCGLVKNMSLLGLVSTQSLESVVEKLFACGMEELMDDTCTPLFGKHKVLLNGDWVGLCADSESFVAELKSRRRQSELPREMEIKRDKDDNEVRIFTDAGRLLRPLLVVENLQKLKQEKPSQYPFDHLLDHGILELIGIEEEEDCNTAWGIKQLLKEPKIYTHCELDLSFLLGVSCAVVPFANHDHGRRVLYQSQKHCQQAIGFSSTNPNIRCDTLSQQLFYPQKPLFKTLASECLKKEVLFNGQNAIVAVNVHLGYNQEDSIVMNKASLERGMFRSEQIRSYKAEVDAKDSEKRKKMDELVQFGKTHSKIGKVDSLEDDGFPFIGANMSTGDIVIGRCTESGADHSIKLKHTERGIVQKVVLSSNDEGKNFAAVSLRQVRSPCLGDKFSSMHGQKGVLGYLEEQQNFPFTIQGIVPDIVINPHAFPSRQTPGQLLEAALSKGIACPIQKEGSSAAYTKLTRHATPFSTPGVTEITEQLHRAGFSRWGNERVYNGRSGEMMRSMIFMGPTFYQRLVHMSEDKVKFRNTGPVHPLTRQPVADRKRFGGIKFGEMERDCLIAHGASANLHERLFTLSDSSQMHICRKCKTYANVIERTPSSGRKIRGPYCRVCVSSDHVVRVYVPYGAKLLCQELFSMGITLNFDTKLC.

Residue aspartate 786 coordinates Mg(2+). Residues cysteine 1108, cysteine 1111, cysteine 1133, and cysteine 1136 each contribute to the Zn(2+) site. Residues 1108–1136 (CRKCKTYANVIERTPSSGRKIRGPYCRVC) form a C4-type zinc finger.

The protein belongs to the RNA polymerase beta chain family. In terms of assembly, component of the RNA polymerase IV and V complexes. Interacts with SSH1, NRPD1 and NRPE1. In terms of tissue distribution, mostly expressed in seedlings, flowers and roots, present ubiquitously, except in sperm cells.

Its subcellular location is the nucleus. It catalyses the reaction RNA(n) + a ribonucleoside 5'-triphosphate = RNA(n+1) + diphosphate. In terms of biological role, DNA-dependent RNA polymerase catalyzes the transcription of DNA into RNA using the four ribonucleoside triphosphates as substrates. Second largest component of RNA polymerases IV and V which mediate short-interfering RNAs (siRNA) accumulation and subsequent RNA-directed DNA methylation-dependent (RdDM) transcriptional gene silencing (TGS) of endogenous repeated sequences, including transposable elements. Proposed to contribute to the polymerase catalytic activity and forms the polymerase active center together with the largest subunit. Also required for full erasure of methylation when the RNA trigger is withdrawn. Required for intercellular RNA interference (RNAi) leading to systemic post-transcriptional gene silencing. Involved in the maintenance of post-transcriptional RNA silencing. During interphase, mediates siRNA-independent heterochromatin association and methylation into chromocenters and condensation and cytosine methylation at pericentromeric major repeats. Required for complete maintenance of the 35S promoter homology-dependent TGS in transgenic plants and for the initial establishment of DNA methylation. This Arabidopsis thaliana (Mouse-ear cress) protein is DNA-directed RNA polymerases IV and V subunit 2 (NRPD2).